Consider the following 462-residue polypeptide: MEKKYILYFLFLLPFFMILVIAETEEENPDDLIQLTVTRNKIMTAQYECYQKIMQDPIQQTEGIYCNRTWDGWLCWNDVAAGTESMQHCPDYFQDFDPSEKVTKICDQDGNWFRHPESNRTWTNYTQCNINTHEKVQTALNLFYLTIIGHGLSIASLLISLGIFFYFKSLSCQRITLHKNLFFSFVCNSIVTIIHLTAVANNQALVATNPVSCKVFQFIHLYLMGCNYFWMLCEGIYLHTLIVVAVFAEKQHLMWYYFLGWGFPLIPACIHAVARRLYYNDNCWISSDTHLLYIIHGPICAALLVNLFFLLNIVRVLITKLKVTHQAESNLYMKAVRATLILVPLLGIEFVLIPWRPEGKIAEEVYDYIMHILVHYQGLLVSTIYCFFNGEVQAILRRNWNQYKIQFGNSFSHSDALRSASYTVSTISDGAGYSHDYPSEHLNGKSIHDMENIVIKPEKLYD.

An N-terminal signal peptide occupies residues 1–22 (MEKKYILYFLFLLPFFMILVIA). Residues 23 to 140 (ETEEENPDDL…NTHEKVQTAL (118 aa)) lie on the Extracellular side of the membrane. Intrachain disulfides connect cysteine 49/cysteine 75, cysteine 66/cysteine 106, and cysteine 89/cysteine 128. Asparagine 67, asparagine 119, and asparagine 124 each carry an N-linked (GlcNAc...) asparagine glycan. A helical membrane pass occupies residues 141 to 165 (NLFYLTIIGHGLSIASLLISLGIFF). Topologically, residues 166–176 (YFKSLSCQRIT) are cytoplasmic. Residues 177–199 (LHKNLFFSFVCNSIVTIIHLTAV) traverse the membrane as a helical segment. Over 200 to 210 (ANNQALVATNP) the chain is Extracellular. Residues 211–239 (VSCKVFQFIHLYLMGCNYFWMLCEGIYLH) traverse the membrane as a helical segment. Residues 240–253 (TLIVVAVFAEKQHL) are Cytoplasmic-facing. A helical transmembrane segment spans residues 254–274 (MWYYFLGWGFPLIPACIHAVA). Over 275–290 (RRLYYNDNCWISSDTH) the chain is Extracellular. The segment at 289–290 (TH) is required for RAMP3 interaction. Residues 291–315 (LLYIIHGPICAALLVNLFFLLNIVR) form a helical membrane-spanning segment. Residues 316–330 (VLITKLKVTHQAESN) lie on the Cytoplasmic side of the membrane. A helical transmembrane segment spans residues 331–352 (LYMKAVRATLILVPLLGIEFVL). The Extracellular segment spans residues 353-367 (IPWRPEGKIAEEVYD). The helical transmembrane segment at 368–388 (YIMHILVHYQGLLVSTIYCFF) threads the bilayer. Residues 389–462 (NGEVQAILRR…IVIKPEKLYD (74 aa)) lie on the Cytoplasmic side of the membrane. 2 positions are modified to phosphoserine: serine 421 and serine 446.

It belongs to the G-protein coupled receptor 2 family. In terms of assembly, heterodimer of CALCRL and RAMP1; the receptor complex functions as CGRP receptor. Heterodimer of CALCRL and RAMP2 or CALCRL and RAMP3; the complexes function as adrenomedullin receptor. Detected in lung and coronary artery.

The protein localises to the cell membrane. Functionally, g protein-coupled receptor which specificity is determined by its interaction with receptor-activity-modifying proteins (RAMPs). Together with RAMP1, form the receptor complex for calcitonin-gene-related peptides CALCA/CGRP1 and CALCB/CGRP2. Together with RAMP2 or RAMP3, function as receptor complexes for adrenomedullin (ADM and ADM2). Ligand binding causes a conformation change that triggers signaling via guanine nucleotide-binding proteins (G proteins) and modulates the activity of downstream effectors. Activates cAMP-dependent pathway. The sequence is that of Calcitonin gene-related peptide type 1 receptor (CALCRL) from Sus scrofa (Pig).